Here is a 465-residue protein sequence, read N- to C-terminus: MLDYIPWIGNGHRYGNDHRGSNSSTSGVTTQGQQSQNASGTEPASTFSNVGVGLKANVQGTLGGSQTTTTGKDIPKWPTLDQANLQLWTGAGWRNDKASSGQSDENHTKFTSATGSGQQGSSSGTTNSAGNPDSLKQDKVDKSGDSVTVAETTSGDNLTNYTNLPPNLTPTADWPNALSFTNKNNAQRAQLFLRALLGSIPVLVNKSGQDDSNKFQATDQKWSYTELKSDQTKLNLPAYGEVNGLLNPALVEVYGLSSTQGSSTGAGGAGGNTGGDTNTQTYARPGIGFKLPSTDSESSKATLITPGLAWTAQDVGNLVVSGTSLSFQLGGWLVTFTDFIKPRSGYLGLQLTGLDANDSDQRELIWAPPALNRLSWQLGQPLGPRGECVGFQGGVGGSSSVRLASSYKYHHRNEGYLIGAHQCFGLSGELYRPGFVQGFHSKLRPKPKHLPLPALGAGEKSRFLW.

3 disordered regions span residues 9 to 48, 59 to 78, and 93 to 167; these read GNGH…STFS, QGTL…PKWP, and WRND…LPPN. Low complexity predominate over residues 21-37; the sequence is SNSSTSGVTTQGQQSQN. Over residues 38–48 the composition is skewed to polar residues; sequence ASGTEPASTFS. Residues 111-131 are compositionally biased toward low complexity; it reads TSATGSGQQGSSSGTTNSAGN. The span at 135–144 shows a compositional bias: basic and acidic residues; that stretch reads LKQDKVDKSG. A compositionally biased stretch (polar residues) spans 145-156; sequence DSVTVAETTSGD. Residues 157-167 show a composition bias toward low complexity; the sequence is NLTNYTNLPPN.

It belongs to the adhesin P1 family.

This chain is Putative adhesin P1-like protein MPN_286, found in Mycoplasma pneumoniae (strain ATCC 29342 / M129 / Subtype 1) (Mycoplasmoides pneumoniae).